A 217-amino-acid chain; its full sequence is Salivary glue protein Sgs-3 (217 aa).

The first 23 residues, 1–23 (MKLTIATVLASILLIGFANVANC), serve as a signal peptide directing secretion. Over residues 45 to 130 (KSTSTTTTTT…KPTTHSTPKT (86 aa)) the composition is skewed to low complexity. A disordered region spans residues 45 to 163 (KSTSTTTTTT…KHTTPTTTTT (119 aa)). Residues 131-154 (KPTKHTTPKTKPTKHTTPKTKPTK) are compositionally biased toward basic residues.

The sequence is that of Salivary glue protein Sgs-3 (Sgs3) from Drosophila simulans (Fruit fly).